The primary structure comprises 375 residues: Lipid-A-disaccharide synthase (375 aa).

It belongs to the LpxB family.

The enzyme catalyses a lipid X + a UDP-2-N,3-O-bis[(3R)-3-hydroxyacyl]-alpha-D-glucosamine = a lipid A disaccharide + UDP + H(+). It functions in the pathway bacterial outer membrane biogenesis; LPS lipid A biosynthesis. Its function is as follows. Condensation of UDP-2,3-diacylglucosamine and 2,3-diacylglucosamine-1-phosphate to form lipid A disaccharide, a precursor of lipid A, a phosphorylated glycolipid that anchors the lipopolysaccharide to the outer membrane of the cell. The chain is Lipid-A-disaccharide synthase from Pseudomonas putida (strain ATCC 700007 / DSM 6899 / JCM 31910 / BCRC 17059 / LMG 24140 / F1).